Reading from the N-terminus, the 293-residue chain is Pyridoxal 5'-phosphate synthase subunit PdxS (293 aa).

Asp-25 contributes to the D-ribose 5-phosphate binding site. Residue Lys-82 is the Schiff-base intermediate with D-ribose 5-phosphate of the active site. Residue Gly-154 participates in D-ribose 5-phosphate binding. Arg-166 is a binding site for D-glyceraldehyde 3-phosphate. D-ribose 5-phosphate-binding positions include Gly-215 and 236 to 237 (GS).

The protein belongs to the PdxS/SNZ family. In the presence of PdxT, forms a dodecamer of heterodimers.

The enzyme catalyses aldehydo-D-ribose 5-phosphate + D-glyceraldehyde 3-phosphate + L-glutamine = pyridoxal 5'-phosphate + L-glutamate + phosphate + 3 H2O + H(+). The protein operates within cofactor biosynthesis; pyridoxal 5'-phosphate biosynthesis. Functionally, catalyzes the formation of pyridoxal 5'-phosphate from ribose 5-phosphate (RBP), glyceraldehyde 3-phosphate (G3P) and ammonia. The ammonia is provided by the PdxT subunit. Can also use ribulose 5-phosphate and dihydroxyacetone phosphate as substrates, resulting from enzyme-catalyzed isomerization of RBP and G3P, respectively. The chain is Pyridoxal 5'-phosphate synthase subunit PdxS from Thermotoga petrophila (strain ATCC BAA-488 / DSM 13995 / JCM 10881 / RKU-1).